The primary structure comprises 1263 residues: Kinesin-like protein KIN-12E (1263 aa).

Residues 21–44 (PAPSESLRSVPCTPEANTVSRDNH) are disordered. Over residues 35 to 44 (EANTVSRDNH) the composition is skewed to polar residues. Residues 93 to 430 (NVQVIIRTRP…LKFAQRAKLI (338 aa)) form the Kinesin motor domain. 174 to 181 (GQTGSGKT) serves as a coordination point for ATP. Coiled-coil stretches lie at residues 679-737 (SKKL…KIRS), 764-805 (AEAH…AEEN), 831-881 (ALEV…KRLL), 905-966 (SEKS…HQSE), 1091-1168 (TDLL…TIQE), and 1193-1251 (LRKE…VLSL).

It belongs to the TRAFAC class myosin-kinesin ATPase superfamily. Kinesin family. KIN-12 subfamily.

The sequence is that of Kinesin-like protein KIN-12E from Arabidopsis thaliana (Mouse-ear cress).